The sequence spans 228 residues: Lipoprotein-releasing system ATP-binding protein LolD (228 aa).

The 220-residue stretch at 6 to 225 (LEAKDVYKHF…ILHMQDGLWV (220 aa)) folds into the ABC transporter domain. 42 to 49 (GASGSGKS) is an ATP binding site.

This sequence belongs to the ABC transporter superfamily. Lipoprotein translocase (TC 3.A.1.125) family. The complex is composed of two ATP-binding proteins (LolD) and two transmembrane proteins (LolC and LolE).

The protein localises to the cell inner membrane. In terms of biological role, part of the ABC transporter complex LolCDE involved in the translocation of mature outer membrane-directed lipoproteins, from the inner membrane to the periplasmic chaperone, LolA. Responsible for the formation of the LolA-lipoprotein complex in an ATP-dependent manner. This Acinetobacter baylyi (strain ATCC 33305 / BD413 / ADP1) protein is Lipoprotein-releasing system ATP-binding protein LolD.